The sequence spans 104 residues: Replication restart protein PriB (104 aa).

Residues 1–101 (MTNRLELSGV…LHADHIEIIC (101 aa)) enclose the SSB domain.

Belongs to the PriB family. As to quaternary structure, homodimer. Interacts with PriA and DnaT. Component of the replication restart primosome. Primosome assembly occurs via a 'hand-off' mechanism. PriA binds to replication forks, subsequently PriB then DnaT bind; DnaT then displaces ssDNA to generate the helicase loading substrate.

Its function is as follows. Involved in the restart of stalled replication forks, which reloads the replicative helicase on sites other than the origin of replication; the PriA-PriB pathway is the major replication restart pathway. During primosome assembly it facilitates complex formation between PriA and DnaT on DNA; stabilizes PriA on DNA. Stimulates the DNA unwinding activity of PriA helicase. The protein is Replication restart protein PriB of Photobacterium profundum (strain SS9).